Reading from the N-terminus, the 61-residue chain is Small ribosomal subunit protein uS14B (61 aa).

Cys-24, Cys-27, Cys-40, and Cys-43 together coordinate Zn(2+).

The protein belongs to the universal ribosomal protein uS14 family. Zinc-binding uS14 subfamily. As to quaternary structure, part of the 30S ribosomal subunit. Contacts proteins S3 and S10. Requires Zn(2+) as cofactor.

Binds 16S rRNA, required for the assembly of 30S particles and may also be responsible for determining the conformation of the 16S rRNA at the A site. The polypeptide is Small ribosomal subunit protein uS14B (Rhodococcus jostii (strain RHA1)).